The primary structure comprises 362 residues: Epoxide hydrolase 4 (362 aa).

The chain crosses the membrane as a helical; Signal-anchor for type II membrane protein span at residues Ser-17–Leu-37. One can recognise an AB hydrolase-1 domain in the interval Pro-94–Leu-211. Residue Asp-169 is the Nucleophile of the active site. Tyr-281 serves as the catalytic Proton donor. His-336 serves as the catalytic Proton acceptor.

It belongs to the AB hydrolase superfamily. Epoxide hydrolase family.

It is found in the membrane. In Homo sapiens (Human), this protein is Epoxide hydrolase 4 (EPHX4).